Here is a 449-residue protein sequence, read N- to C-terminus: Required for meiotic nuclear division protein 1 homolog (449 aa).

The N-terminal 12 residues, Met1 to Ser12, are a transit peptide targeting the mitochondrion.

Belongs to the RMD1/sif2 family. In terms of assembly, homooligomer.

It is found in the mitochondrion. Required for mitochondrial translation, possibly by coordinating the assembly or maintenance of the mitochondrial ribosome. The polypeptide is Required for meiotic nuclear division protein 1 homolog (RMND1) (Homo sapiens (Human)).